Reading from the N-terminus, the 157-residue chain is 2-C-methyl-D-erythritol 2,4-cyclodiphosphate synthase (157 aa).

Aspartate 8 and histidine 10 together coordinate a divalent metal cation. 4-CDP-2-C-methyl-D-erythritol 2-phosphate contacts are provided by residues 8–10 (DVH) and 34–35 (HS). Residue histidine 42 participates in a divalent metal cation binding. 4-CDP-2-C-methyl-D-erythritol 2-phosphate is bound by residues 56-58 (DIG), 61-65 (FPDTD), 100-106 (AQAPKMA), 132-135 (TTTE), phenylalanine 139, and arginine 142.

Belongs to the IspF family. In terms of assembly, homotrimer. It depends on a divalent metal cation as a cofactor.

The catalysed reaction is 4-CDP-2-C-methyl-D-erythritol 2-phosphate = 2-C-methyl-D-erythritol 2,4-cyclic diphosphate + CMP. It functions in the pathway isoprenoid biosynthesis; isopentenyl diphosphate biosynthesis via DXP pathway; isopentenyl diphosphate from 1-deoxy-D-xylulose 5-phosphate: step 4/6. Involved in the biosynthesis of isopentenyl diphosphate (IPP) and dimethylallyl diphosphate (DMAPP), two major building blocks of isoprenoid compounds. Catalyzes the conversion of 4-diphosphocytidyl-2-C-methyl-D-erythritol 2-phosphate (CDP-ME2P) to 2-C-methyl-D-erythritol 2,4-cyclodiphosphate (ME-CPP) with a corresponding release of cytidine 5-monophosphate (CMP). This Pseudomonas savastanoi pv. phaseolicola (strain 1448A / Race 6) (Pseudomonas syringae pv. phaseolicola (strain 1448A / Race 6)) protein is 2-C-methyl-D-erythritol 2,4-cyclodiphosphate synthase.